A 228-amino-acid polypeptide reads, in one-letter code: 2,3-bisphosphoglycerate-dependent phosphoglycerate mutase (228 aa).

Substrate-binding positions include 8–15 (RHGQSQWN), 21–22 (TG), R60, 87–90 (ERHY), K98, 114–115 (RR), and 180–181 (GN). H9 functions as the Tele-phosphohistidine intermediate in the catalytic mechanism. Catalysis depends on E87, which acts as the Proton donor/acceptor.

It belongs to the phosphoglycerate mutase family. BPG-dependent PGAM subfamily. In terms of assembly, homodimer.

The enzyme catalyses (2R)-2-phosphoglycerate = (2R)-3-phosphoglycerate. It participates in carbohydrate degradation; glycolysis; pyruvate from D-glyceraldehyde 3-phosphate: step 3/5. Its function is as follows. Catalyzes the interconversion of 2-phosphoglycerate and 3-phosphoglycerate. The polypeptide is 2,3-bisphosphoglycerate-dependent phosphoglycerate mutase (Erythrobacter litoralis (strain HTCC2594)).